A 284-amino-acid chain; its full sequence is Ribosomal RNA small subunit methyltransferase A (284 aa).

Residues Asn22, Leu24, Gly49, Glu70, Asp97, and Asn117 each coordinate S-adenosyl-L-methionine.

It belongs to the class I-like SAM-binding methyltransferase superfamily. rRNA adenine N(6)-methyltransferase family. RsmA subfamily.

Its subcellular location is the cytoplasm. It carries out the reaction adenosine(1518)/adenosine(1519) in 16S rRNA + 4 S-adenosyl-L-methionine = N(6)-dimethyladenosine(1518)/N(6)-dimethyladenosine(1519) in 16S rRNA + 4 S-adenosyl-L-homocysteine + 4 H(+). Its function is as follows. Specifically dimethylates two adjacent adenosines (A1518 and A1519) in the loop of a conserved hairpin near the 3'-end of 16S rRNA in the 30S particle. May play a critical role in biogenesis of 30S subunits. This Desulforapulum autotrophicum (strain ATCC 43914 / DSM 3382 / VKM B-1955 / HRM2) (Desulfobacterium autotrophicum) protein is Ribosomal RNA small subunit methyltransferase A.